We begin with the raw amino-acid sequence, 35 residues long: Conotoxin Cal6.1g (35 aa).

Residues 1–8 (GLSRPSKR) constitute a propeptide that is removed on maturation. 3 disulfide bridges follow: C9/C25, C16/C29, and C24/C34.

The protein belongs to the conotoxin O1 superfamily. As to expression, expressed by the venom duct.

The protein localises to the secreted. Probable neurotoxin with unknown target. Possibly targets ion channels. This is Conotoxin Cal6.1g from Californiconus californicus (California cone).